Consider the following 395-residue polypeptide: Phosphoglycerate kinase (395 aa).

Residues 20–22, Arg-35, 58–61, Arg-117, and Arg-150 each bind substrate; these read DLN and HFGR. Residues Lys-200, Glu-322, and 352-355 contribute to the ATP site; that span reads GGDT.

Belongs to the phosphoglycerate kinase family. In terms of assembly, monomer.

It is found in the cytoplasm. It carries out the reaction (2R)-3-phosphoglycerate + ATP = (2R)-3-phospho-glyceroyl phosphate + ADP. It functions in the pathway carbohydrate degradation; glycolysis; pyruvate from D-glyceraldehyde 3-phosphate: step 2/5. The protein is Phosphoglycerate kinase of Brucella suis biovar 1 (strain 1330).